The primary structure comprises 424 residues: Probable ribonuclease FAU-1 (424 aa).

Belongs to the FAU-1 family.

Probable RNase involved in rRNA stability through maturation and/or degradation of precursor rRNAs. Binds to RNA in loop regions with AU-rich sequences. In Saccharolobus islandicus (strain Y.G.57.14 / Yellowstone #1) (Sulfolobus islandicus), this protein is Probable ribonuclease FAU-1.